The chain runs to 640 residues: Insulin-like growth factor 1 receptor (640 aa).

Fibronectin type-III domains lie at Val5 to Ala101 and Ile107 to Lys200. Residues Glu14–His208 lie on the Extracellular side of the membrane. N-linked (GlcNAc...) asparagine glycans are attached at residues Asn20, Asn29, Asn37, Asn173, and Asn186. Residues Leu209–His232 form a helical membrane-spanning segment. Over Arg233–Cys640 the chain is Cytoplasmic. The short motif at Asn250–Tyr253 is the IRS1- and SHC1-binding element. Position 253 is a phosphotyrosine (Tyr253). The region spanning Ile272 to Phe547 is the Protein kinase domain. ATP is bound by residues Leu278–Val286 and Lys306. The active-site Proton acceptor is Asp408. A phosphotyrosine; by autocatalysis mark is found at Tyr434, Tyr438, and Tyr439. Glycyl lysine isopeptide (Lys-Gly) (interchain with G-Cter in ubiquitin) cross-links involve residues Lys441 and Lys444. Ser551 is subject to Phosphoserine; by GSK3-beta. Ser555 bears the Phosphoserine mark. The tract at residues Ser555–Cys640 is disordered. A compositionally biased stretch (acidic residues) spans Pro563 to Asn572. Residues Met573–Leu589 show a composition bias toward low complexity. Basic and acidic residues predominate over residues Pro590–Glu599.

It belongs to the protein kinase superfamily. Tyr protein kinase family. Insulin receptor subfamily. As to quaternary structure, tetramer of 2 alpha and 2 beta chains linked by disulfide bonds. The alpha chains contribute to the formation of the ligand-binding domain, while the beta chain carries the kinase domain. Interacts with PIK3R1 and with the PTB/PID domains of IRS1 and SHC1 in vitro when autophosphorylated on tyrosine residues. Forms a hybrid receptor with INSR, the hybrid is a tetramer consisting of 1 alpha chain and 1 beta chain of INSR and 1 alpha chain and 1 beta chain of IGF1R. Interacts with ARRB1 and ARRB2. Interacts with GRB10. Interacts with RACK1. Interacts with SOCS1, SOCS2 and SOCS3. Interacts with 14-3-3 proteins. Interacts with NMD2. Interacts with MAP3K5. Interacts with STAT3. Interacts (nascent precursor form) with ZFAND2B. Autophosphorylated on tyrosine residues in response to ligand binding. Autophosphorylation occurs in trans, i.e. one subunit of the dimeric receptor phosphorylates tyrosine residues on the other subunit. Autophosphorylation occurs in a sequential manner; Tyr-438 is predominantly phosphorylated first, followed by phosphorylation of Tyr-434 and Tyr-439. While every single phosphorylation increases kinase activity, all three tyrosine residues in the kinase activation loop (Tyr-438, Tyr-434 and Tyr-439) have to be phosphorylated for optimal activity. Can be autophosphorylated at additional tyrosine residues (in vitro). Autophosphorylated is followed by phosphorylation of juxtamembrane tyrosines and C-terminal serines. May also be phosphorylated at Tyr-434 and Tyr-439 by mTORC2. Phosphorylation of Tyr-253 is required for IRS1- and SHC1-binding. Phosphorylation of Ser-551 by GSK-3beta restrains kinase activity and promotes cell surface expression, it requires a priming phosphorylation at Ser-555. Dephosphorylated by PTPN1. Post-translationally, polyubiquitinated at Lys-441 and Lys-444 through both 'Lys-48' and 'Lys-29' linkages, promoting receptor endocytosis and subsequent degradation by the proteasome. Ubiquitination is facilitated by pre-existing phosphorylation. In terms of processing, sumoylated with SUMO1. Controlled by regulated intramembrane proteolysis (RIP). Undergoes metalloprotease-dependent constitutive ectodomain shedding to produce a membrane-anchored 52 kDa C-Terminal fragment which is further processed by presenilin gamma-secretase to yield an intracellular 50 kDa fragment.

The protein localises to the cell membrane. The catalysed reaction is L-tyrosyl-[protein] + ATP = O-phospho-L-tyrosyl-[protein] + ADP + H(+). Activated by autophosphorylation at Tyr-434, Tyr-438 and Tyr-439 on the kinase activation loop; phosphorylation at all three tyrosine residues is required for optimal kinase activity. Inhibited by MSC1609119A-1, BMS-754807, PQIP, benzimidazole pyridinone, isoquinolinedione, bis-azaindole, 3-cyanoquinoline, 2,4-bis-arylamino-1,3-pyrimidine, pyrrolopyrimidine, pyrrole-5-carboxaldehyde, picropodophyllin (PPP), tyrphostin derivatives. While most inhibitors bind to the ATP binding pocket, MSC1609119A-1 functions as allosteric inhibitor and binds close to the DFG motif and the activation loop. Receptor tyrosine kinase which mediates actions of insulin-like growth factor 1 (IGF1). Binds IGF1 with high affinity and IGF2 and insulin (INS) with a lower affinity. The activated IGF1R is involved in cell growth and survival control. IGF1R is crucial for tumor transformation and survival of malignant cell. Ligand binding activates the receptor kinase, leading to receptor autophosphorylation, and tyrosines phosphorylation of multiple substrates, that function as signaling adapter proteins including, the insulin-receptor substrates (IRS1/2), Shc and 14-3-3 proteins. Phosphorylation of IRSs proteins lead to the activation of two main signaling pathways: the PI3K-AKT/PKB pathway and the Ras-MAPK pathway. The result of activating the MAPK pathway is increased cellular proliferation, whereas activating the PI3K pathway inhibits apoptosis and stimulates protein synthesis. Phosphorylated IRS1 can activate the 85 kDa regulatory subunit of PI3K (PIK3R1), leading to activation of several downstream substrates, including protein AKT/PKB. AKT phosphorylation, in turn, enhances protein synthesis through mTOR activation and triggers the antiapoptotic effects of IGFIR through phosphorylation and inactivation of BAD. In parallel to PI3K-driven signaling, recruitment of Grb2/SOS by phosphorylated IRS1 or Shc leads to recruitment of Ras and activation of the ras-MAPK pathway. In addition to these two main signaling pathways IGF1R signals also through the Janus kinase/signal transducer and activator of transcription pathway (JAK/STAT). Phosphorylation of JAK proteins can lead to phosphorylation/activation of signal transducers and activators of transcription (STAT) proteins. In particular activation of STAT3, may be essential for the transforming activity of IGF1R. The JAK/STAT pathway activates gene transcription and may be responsible for the transforming activity. JNK kinases can also be activated by the IGF1R. IGF1 exerts inhibiting activities on JNK activation via phosphorylation and inhibition of MAP3K5/ASK1, which is able to directly associate with the IGF1R. When present in a hybrid receptor with INSR, binds IGF1. In Bos taurus (Bovine), this protein is Insulin-like growth factor 1 receptor (IGF1R).